Here is a 535-residue protein sequence, read N- to C-terminus: Phosphoenolpyruvate carboxykinase (ATP) 1 (535 aa).

Residues R58, Y193, and K199 each coordinate substrate. Residues K199, H218, and 234-242 each bind ATP; that span reads GLSGTGKTT. Positions 199 and 218 each coordinate Mn(2+). Position 255 (D255) interacts with Mn(2+). ATP-binding positions include E283, R321, 440–441, and T446; that span reads RI. Residue R321 participates in substrate binding.

It belongs to the phosphoenolpyruvate carboxykinase (ATP) family. It depends on Mn(2+) as a cofactor.

The protein localises to the cytoplasm. The enzyme catalyses oxaloacetate + ATP = phosphoenolpyruvate + ADP + CO2. It participates in carbohydrate biosynthesis; gluconeogenesis. Involved in the gluconeogenesis. Catalyzes the conversion of oxaloacetate (OAA) to phosphoenolpyruvate (PEP) through direct phosphoryl transfer between the nucleoside triphosphate and OAA. This chain is Phosphoenolpyruvate carboxykinase (ATP) 1, found in Salinibacter ruber (strain DSM 13855 / M31).